Reading from the N-terminus, the 130-residue chain is Small ribosomal subunit protein uS9 (130 aa).

It belongs to the universal ribosomal protein uS9 family.

This chain is Small ribosomal subunit protein uS9, found in Bacillus anthracis (strain A0248).